Here is a 241-residue protein sequence, read N- to C-terminus: WAP four-disulfide core domain protein 8 (241 aa).

Positions 1-38 (MWTVRTEGGHFPLHSPTFSWRNVAFLLLLSLALEWTSA) are cleaved as a signal peptide. The 48-residue stretch at 44 to 91 (IKHKPGLCPKERLTCTTELPDSCNTDFDCKEYQKCCFFACQKKCMDPF) folds into the WAP 1 domain. 15 disulfides stabilise this stretch: Cys-51–Cys-79, Cys-58–Cys-83, Cys-66–Cys-78, Cys-72–Cys-87, Cys-95–Cys-145, Cys-104–Cys-128, Cys-120–Cys-141, Cys-154–Cys-182, Cys-165–Cys-186, Cys-169–Cys-181, Cys-175–Cys-190, Cys-201–Cys-229, Cys-208–Cys-232, Cys-216–Cys-228, and Cys-222–Cys-236. A BPTI/Kunitz inhibitor domain is found at 95-145 (CMLPVRHGNCNHEAQRWHFDFKNYRCTPFKYRGCEGNANNFLNEDACRTAC). 2 WAP domains span residues 147 to 194 (LIVK…ARAW) and 195 to 240 (TVKK…MDPR).

As to expression, expressed ubiquitously, the highest levels are found in the epididymis followed by testis and trachea.

It is found in the secreted. This is WAP four-disulfide core domain protein 8 (WFDC8) from Homo sapiens (Human).